The primary structure comprises 507 residues: Heat shock 70 kDa protein 14-B (507 aa).

This sequence belongs to the heat shock protein 70 family. Component of ribosome-associated complex (RAC).

It localises to the cytoplasm. The protein localises to the cytosol. In terms of biological role, component of the ribosome-associated complex (RAC), a complex involved in folding or maintaining nascent polypeptides in a folding-competent state. The sequence is that of Heat shock 70 kDa protein 14-B (hspa14-b) from Xenopus laevis (African clawed frog).